A 196-amino-acid chain; its full sequence is HTH-type transcriptional regulator EcpR (196 aa).

Residues lysine 138–proline 196 enclose the HTH luxR-type domain. A DNA-binding region (H-T-H motif) is located at residues proline 162 to arginine 181.

This sequence belongs to the EcpR/MatA family.

The protein resides in the cytoplasm. Functionally, part of the ecpRABCDE operon, which encodes the E.coli common pilus (ECP). ECP is found in both commensal and pathogenic strains and plays a dual role in early-stage biofilm development and host cell recognition. Positively regulates the expression of the ecp operon. The sequence is that of HTH-type transcriptional regulator EcpR (ecpR) from Escherichia coli O17:K52:H18 (strain UMN026 / ExPEC).